A 162-amino-acid chain; its full sequence is Ribosome maturation factor RimP (162 aa).

It belongs to the RimP family.

It is found in the cytoplasm. Its function is as follows. Required for maturation of 30S ribosomal subunits. This chain is Ribosome maturation factor RimP, found in Beutenbergia cavernae (strain ATCC BAA-8 / DSM 12333 / CCUG 43141 / JCM 11478 / NBRC 16432 / NCIMB 13614 / HKI 0122).